A 345-amino-acid polypeptide reads, in one-letter code: Uroporphyrinogen decarboxylase (345 aa).

Residues 28–32 (RQAGR), Asp-77, Tyr-153, Ser-208, and His-322 contribute to the substrate site.

Belongs to the uroporphyrinogen decarboxylase family. As to quaternary structure, homodimer.

It is found in the cytoplasm. It catalyses the reaction uroporphyrinogen III + 4 H(+) = coproporphyrinogen III + 4 CO2. Its pathway is porphyrin-containing compound metabolism; protoporphyrin-IX biosynthesis; coproporphyrinogen-III from 5-aminolevulinate: step 4/4. Its function is as follows. Catalyzes the decarboxylation of four acetate groups of uroporphyrinogen-III to yield coproporphyrinogen-III. The protein is Uroporphyrinogen decarboxylase of Solibacter usitatus (strain Ellin6076).